We begin with the raw amino-acid sequence, 493 residues long: UDP-glucose 6-dehydrogenase (493 aa).

Residues 11 to 16 (GAGYVG), Asp36, Arg41, and 89 to 93 (VNTPT) contribute to the NAD(+) site. The tract at residues 88–110 (SVNTPTKTYGMGKGRAADLKYIE) is disordered. At Lys107 the chain carries N6-acetyllysine. An allosteric switch region region spans residues 129 to 135 (KSTVPVR). 130–132 (STV) contacts NAD(+). The active-site Proton donor/acceptor is Glu161. Residues 161 to 165 (EFLAE), 220 to 224 (KLAAN), Arg260, and 267 to 273 (KASVGFG) contribute to the substrate site. NAD(+) is bound at residue Glu165. Lys220 functions as the Proton donor/acceptor in the catalytic mechanism. The Nucleophile role is filled by Cys276. Residue 276 to 279 (CFQK) participates in NAD(+) binding. The interval 321 to 325 (SLFNT) is important for formation of active hexamer structure. 338-339 (FK) contributes to the substrate binding site. Arg346 lines the NAD(+) pocket. Position 442 (Arg442) interacts with substrate. Residues 466–493 (VSSKRIPYTPGEIPKFSLQDPPNKKPKV) form a disordered region. Thr474 carries the post-translational modification Phosphothreonine.

It belongs to the UDP-glucose/GDP-mannose dehydrogenase family. In terms of assembly, homohexamer.

The catalysed reaction is UDP-alpha-D-glucose + 2 NAD(+) + H2O = UDP-alpha-D-glucuronate + 2 NADH + 3 H(+). It participates in nucleotide-sugar biosynthesis; UDP-alpha-D-glucuronate biosynthesis; UDP-alpha-D-glucuronate from UDP-alpha-D-glucose: step 1/1. With respect to regulation, UDP-alpha-D-xylose (UDX) acts as a feedback inhibitor. It binds at the same site as the substrate, but functions as allosteric inhibitor by triggering a conformation change that disrupts the active hexameric ring structure and gives rise to an inactive, horseshoe-shaped hexamer. Catalyzes the formation of UDP-alpha-D-glucuronate, a constituent of complex glycosaminoglycans. Required for the biosynthesis of chondroitin sulfate and heparan sulfate. Required for embryonic development via its role in the biosynthesis of glycosaminoglycans. Required for proper brain and neuronal development. In Mus musculus (Mouse), this protein is UDP-glucose 6-dehydrogenase (Ugdh).